The chain runs to 359 residues: Protein RecA (359 aa).

Residue 73 to 80 participates in ATP binding; the sequence is GPESSGKT.

It belongs to the RecA family.

It is found in the cytoplasm. In terms of biological role, can catalyze the hydrolysis of ATP in the presence of single-stranded DNA, the ATP-dependent uptake of single-stranded DNA by duplex DNA, and the ATP-dependent hybridization of homologous single-stranded DNAs. It interacts with LexA causing its activation and leading to its autocatalytic cleavage. The protein is Protein RecA of Desulfovibrio desulfuricans (strain ATCC 27774 / DSM 6949 / MB).